The sequence spans 213 residues: MATPAVSGLSRQVRCFSTSVVRPFAKLVRPPVQVYGIEGRYATALYSAASKQNKLEQVEKELLRVAQILKEPKVAAPVLNPYVKRSIKVKSLNDITAKERFSPLTTNLINLLAENGRLSNTQGVVSAFSTMMSAHRGEVPCTVTSASPLEEATLSELKTVLKSFLSQGQVLKLEAKTDPSILGGMIVRIGEKYVDMSVKTKIQKLSRAMRETA.

Residues 1 to 23 (MATPAVSGLSRQVRCFSTSVVRP) constitute a mitochondrion transit peptide. The SIFI-degron signature appears at 5-23 (AVSGLSRQVRCFSTSVVRP). An N6-acetyllysine mark is found at Lys54, Lys60, Lys70, and Lys73. The residue at position 90 (Lys90) is an N6-succinyllysine. N6-acetyllysine; alternate occurs at positions 158 and 162. Residues Lys158 and Lys162 each carry the N6-succinyllysine; alternate modification. N6-acetyllysine is present on residues Lys172, Lys176, and Lys192. Residue Lys199 is modified to N6-succinyllysine.

The protein belongs to the ATPase delta chain family. As to quaternary structure, component of the ATP synthase complex composed at least of ATP5F1A/subunit alpha, ATP5F1B/subunit beta, ATP5MC1/subunit c (homooctomer), MT-ATP6/subunit a, MT-ATP8/subunit 8, ATP5ME/subunit e, ATP5MF/subunit f, ATP5MG/subunit g, ATP5MK/subunit k, ATP5MJ/subunit j, ATP5F1C/subunit gamma, ATP5F1D/subunit delta, ATP5F1E/subunit epsilon, ATP5PF/subunit F6, ATP5PB/subunit b, ATP5PD/subunit d, ATP5PO/subunit OSCP. ATP synthase complex consists of a soluble F(1) head domain (subunits alpha(3) and beta(3)) - the catalytic core - and a membrane F(0) domain - the membrane proton channel (subunits c, a, 8, e, f, g, k and j). These two domains are linked by a central stalk (subunits gamma, delta, and epsilon) rotating inside the F1 region and a stationary peripheral stalk (subunits F6, b, d, and OSCP). Acetylation at Lys-162 decreases ATP production. Deacetylated by SIRT3. In terms of processing, in response to mitochondrial stress, the precursor protein is ubiquitinated by the SIFI complex in the cytoplasm before mitochondrial import, leading to its degradation. Within the SIFI complex, UBR4 initiates ubiquitin chain that are further elongated or branched by KCMF1.

Its subcellular location is the mitochondrion. The protein resides in the mitochondrion inner membrane. Subunit OSCP, of the mitochondrial membrane ATP synthase complex (F(1)F(0) ATP synthase or Complex V) that produces ATP from ADP in the presence of a proton gradient across the membrane which is generated by electron transport complexes of the respiratory chain. ATP synthase complex consist of a soluble F(1) head domain - the catalytic core - and a membrane F(1) domain - the membrane proton channel. These two domains are linked by a central stalk rotating inside the F(1) region and a stationary peripheral stalk. During catalysis, ATP synthesis in the catalytic domain of F(1) is coupled via a rotary mechanism of the central stalk subunits to proton translocation. In vivo, can only synthesize ATP although its ATP hydrolase activity can be activated artificially in vitro. Part of the complex F(0) domain. Part of the complex F(0) domain and the peripheric stalk, which acts as a stator to hold the catalytic alpha(3)beta(3) subcomplex and subunit a/ATP6 static relative to the rotary elements. This is ATP synthase peripheral stalk subunit OSCP, mitochondrial from Pongo abelii (Sumatran orangutan).